The primary structure comprises 1842 residues: Fatty acid synthase subunit alpha (1842 aa).

Residues 101–141 (PAEAPASTSSTPKVETAAAAAPAATPAPAPAQTSAPAAALP) are disordered. The segment covering 116–139 (TAAAAAPAATPAPAPAQTSAPAAA) has biased composition (low complexity). The region spanning 145–220 (PKALEVLHTL…AIMQSSFNGS (76 aa)) is the Carrier domain. Ser180 bears the O-(pantetheine 4'-phosphoryl)serine mark. Ser604 is subject to Phosphoserine. In terms of domain architecture, Ketosynthase family 3 (KS3) spans 1079 to 1616 (LQEVVIDHDL…QVGGQVIVIH (538 aa)). Cys1262 (for beta-ketoacyl synthase activity) is an active-site residue. A disordered region spans residues 1304–1332 (GATSNAAKETERGRTPQEMSRPATSTRDG). Ser1412 carries the phosphoserine modification. Catalysis depends on for beta-ketoacyl synthase activity residues His1501 and His1542. Asp1728, Val1729, and Glu1730 together coordinate Mg(2+). Acetyl-CoA is bound by residues 1728-1730 (DVE), Tyr1754, Ser1764, 1773-1783 (EAVFKSLGISG), 1797-1800 (SSES), and 1827-1829 (ISH). Residues Ser1828 and His1829 each coordinate Mg(2+).

It belongs to the thiolase-like superfamily. Fungal fatty acid synthetase subunit alpha family. As to quaternary structure, [Alpha(6)beta(6)] hexamers of two multifunctional subunits (alpha and beta).

It carries out the reaction acetyl-CoA + n malonyl-CoA + 2n NADPH + 4n H(+) = a long-chain-acyl-CoA + n CoA + n CO2 + 2n NADP(+).. It catalyses the reaction a fatty acyl-[ACP] + malonyl-[ACP] + H(+) = a 3-oxoacyl-[ACP] + holo-[ACP] + CO2. The catalysed reaction is a (3R)-hydroxyacyl-[ACP] + NADP(+) = a 3-oxoacyl-[ACP] + NADPH + H(+). Fatty acid synthetase catalyzes the formation of long-chain fatty acids from acetyl-CoA, malonyl-CoA and NADPH. The alpha subunit contains domains for: acyl carrier protein, 3-oxoacyl-[acyl-carrier-protein] reductase, and 3-oxoacyl-[acyl-carrier-protein] synthase. This subunit coordinates the binding of the six beta subunits to the enzyme complex. This is Fatty acid synthase subunit alpha (fas2) from Schizosaccharomyces pombe (strain 972 / ATCC 24843) (Fission yeast).